Reading from the N-terminus, the 432-residue chain is Pachytene checkpoint protein 2 homolog (432 aa).

Position 1 is an N-acetylmethionine (Met1). 179-186 (GPPGTGKT) provides a ligand contact to ATP.

The protein belongs to the AAA ATPase family. PCH2 subfamily. As to quaternary structure, specifically interacts with the ligand binding domain of the thyroid receptor (TR). This interaction does not require the presence of thyroid hormone for its interaction. Interacts with proteasome subunit PSMA8; to participate in meiosis progression during spermatogenesis.

In terms of biological role, plays a key role in chromosome recombination and chromosome structure development during meiosis. Required at early steps in meiotic recombination that leads to non-crossovers pathways. Also needed for efficient completion of homologous synapsis by influencing crossover distribution along the chromosomes affecting both crossovers and non-crossovers pathways. Also required for development of higher-order chromosome structures and is needed for synaptonemal-complex formation. In males, required for efficient synapsis of the sex chromosomes and for sex body formation. Promotes early steps of the DNA double-strand breaks (DSBs) repair process upstream of the assembly of RAD51 complexes. Required for depletion of HORMAD1 and HORMAD2 from synapsed chromosomes. In Canis lupus familiaris (Dog), this protein is Pachytene checkpoint protein 2 homolog (TRIP13).